We begin with the raw amino-acid sequence, 397 residues long: Tyrosine--tRNA ligase (397 aa).

Positions 39 to 48 (PTAPDLHLGH) match the 'HIGH' region motif. The short motif at 223-227 (KMSKS) is the 'KMSKS' region element. Lys226 is a binding site for ATP. The region spanning 334–395 (YPIANLVHDL…GKRKFAKIRL (62 aa)) is the S4 RNA-binding domain.

It belongs to the class-I aminoacyl-tRNA synthetase family. TyrS type 2 subfamily. In terms of assembly, homodimer.

The protein localises to the cytoplasm. The catalysed reaction is tRNA(Tyr) + L-tyrosine + ATP = L-tyrosyl-tRNA(Tyr) + AMP + diphosphate + H(+). Functionally, catalyzes the attachment of tyrosine to tRNA(Tyr) in a two-step reaction: tyrosine is first activated by ATP to form Tyr-AMP and then transferred to the acceptor end of tRNA(Tyr). This is Tyrosine--tRNA ligase from Methylococcus capsulatus (strain ATCC 33009 / NCIMB 11132 / Bath).